A 489-amino-acid polypeptide reads, in one-letter code: Coronin-1B (489 aa).

The residue at position 2 (Ser-2) is a Phosphoserine; by PKC. WD repeat units lie at residues 18 to 72, 73 to 122, 123 to 166, 167 to 210, 211 to 256, and 257 to 296; these read QPVK…GRID, KAYP…SPLT, EPVV…GTAE, ELYR…RGTL, VAER…ENLE, and EPMA…RYFE. A disordered region spans residues 408–444; sequence RRNVLSDSRPAMAPGSSHLGAPASTTTAADATPSGSL. A compositionally biased stretch (low complexity) spans 428-441; it reads APASTTTAADATPS. Residues 449–474 are a coiled coil; it reads EAGKLEEVMQELRALRALVKEQGDRI.

Belongs to the WD repeat coronin family. As to quaternary structure, forms homooligomers, but does not form complexes with the other coronins. Interacts with Arp2/3 complex components, including ACTR2, ARPC1B and ARPC2. Binds actin. Post-translationally, phosphorylation by PKC on Ser-2 regulates the interaction with the Arp2/3 complex and cell motility in fibroblasts. Phosphorylation does not seem to affect subcellular location.

The protein resides in the cytoplasm. It is found in the cytoskeleton. Its subcellular location is the stress fiber. Regulates leading edge dynamics and cell motility in fibroblasts. May be involved in cytokinesis and signal transduction. The polypeptide is Coronin-1B (CORO1B) (Homo sapiens (Human)).